The sequence spans 313 residues: Type II methyltransferase M.NlaX (313 aa).

An SAM-dependent MTase C5-type domain is found at 2 to 308 (FKIIDLFAGI…EQMKAALSAV (307 aa)). The active site involves Cys-74.

The protein belongs to the class I-like SAM-binding methyltransferase superfamily. C5-methyltransferase family.

The catalysed reaction is a 2'-deoxycytidine in DNA + S-adenosyl-L-methionine = a 5-methyl-2'-deoxycytidine in DNA + S-adenosyl-L-homocysteine + H(+). In terms of biological role, a methylase, recognizes the double-stranded sequence 5'-CCNGG-3' and methylates C-2 on both strands. May be the equivalent of dcm in this bacteria, or it may protect the DNA from cleavage by the putative NlaXP endonuclease. The protein is Type II methyltransferase M.NlaX (nlaXM) of Neisseria lactamica.